We begin with the raw amino-acid sequence, 155 residues long: Ribonuclease H (155 aa).

An RNase H type-1 domain is found at 9-150 (DGQQVEMWTD…ADALANQGVE (142 aa)). The Mg(2+) site is built by aspartate 18, glutamate 56, aspartate 78, and aspartate 142.

Belongs to the RNase H family. In terms of assembly, monomer. Mg(2+) is required as a cofactor.

Its subcellular location is the cytoplasm. It catalyses the reaction Endonucleolytic cleavage to 5'-phosphomonoester.. Its function is as follows. Endonuclease that specifically degrades the RNA of RNA-DNA hybrids. The protein is Ribonuclease H of Bordetella bronchiseptica (strain ATCC BAA-588 / NCTC 13252 / RB50) (Alcaligenes bronchisepticus).